The sequence spans 162 residues: ATP synthase subunit b (162 aa).

Residues 16-36 (GISGGTIIYQLLMFIILLALL) form a helical membrane-spanning segment.

The protein belongs to the ATPase B chain family. F-type ATPases have 2 components, F(1) - the catalytic core - and F(0) - the membrane proton channel. F(1) has five subunits: alpha(3), beta(3), gamma(1), delta(1), epsilon(1). F(0) has three main subunits: a(1), b(2) and c(10-14). The alpha and beta chains form an alternating ring which encloses part of the gamma chain. F(1) is attached to F(0) by a central stalk formed by the gamma and epsilon chains, while a peripheral stalk is formed by the delta and b chains.

The protein localises to the cell membrane. Functionally, f(1)F(0) ATP synthase produces ATP from ADP in the presence of a proton or sodium gradient. F-type ATPases consist of two structural domains, F(1) containing the extramembraneous catalytic core and F(0) containing the membrane proton channel, linked together by a central stalk and a peripheral stalk. During catalysis, ATP synthesis in the catalytic domain of F(1) is coupled via a rotary mechanism of the central stalk subunits to proton translocation. Component of the F(0) channel, it forms part of the peripheral stalk, linking F(1) to F(0). The chain is ATP synthase subunit b from Bacillus caldotenax.